The primary structure comprises 710 residues: Polyribonucleotide nucleotidyltransferase (710 aa).

Mg(2+) contacts are provided by D501 and D507. Residues 568-628 (PKVQMFQIKP…ETVKQAILFI (61 aa)) enclose the KH domain. The 73-residue stretch at 638–710 (NSIYHAHISR…RIDFVLISKK (73 aa)) folds into the S1 motif domain.

Belongs to the polyribonucleotide nucleotidyltransferase family. Mg(2+) is required as a cofactor.

It is found in the cytoplasm. It carries out the reaction RNA(n+1) + phosphate = RNA(n) + a ribonucleoside 5'-diphosphate. Functionally, involved in mRNA degradation. Catalyzes the phosphorolysis of single-stranded polyribonucleotides processively in the 3'- to 5'-direction. The sequence is that of Polyribonucleotide nucleotidyltransferase from Phytoplasma australiense.